We begin with the raw amino-acid sequence, 263 residues long: Shikimate dehydrogenase (NADP(+)) (263 aa).

Residues Ser16 to Ser18 and Thr65 each bind shikimate. Lys69 (proton acceptor) is an active-site residue. Residues Asn90 and Asp105 each contribute to the shikimate site. Residues Gly125 to Ser129 and Leu208 contribute to the NADP(+) site. Position 210 (Tyr210) interacts with shikimate. Gly230 is an NADP(+) binding site.

The protein belongs to the shikimate dehydrogenase family. In terms of assembly, homodimer.

The enzyme catalyses shikimate + NADP(+) = 3-dehydroshikimate + NADPH + H(+). It functions in the pathway metabolic intermediate biosynthesis; chorismate biosynthesis; chorismate from D-erythrose 4-phosphate and phosphoenolpyruvate: step 4/7. In terms of biological role, involved in the biosynthesis of the chorismate, which leads to the biosynthesis of aromatic amino acids. Catalyzes the reversible NADPH linked reduction of 3-dehydroshikimate (DHSA) to yield shikimate (SA). The protein is Shikimate dehydrogenase (NADP(+)) of Helicobacter pylori (strain P12).